The primary structure comprises 322 residues: Phosphatidylserine decarboxylase proenzyme (322 aa).

Active-site charge relay system; for autoendoproteolytic cleavage activity residues include D90, H147, and S254. The Schiff-base intermediate with substrate; via pyruvic acid; for decarboxylase activity role is filled by S254. Pyruvic acid (Ser); by autocatalysis is present on S254. Positions 296 to 322 (EPAPLPAEEIKAEHDASPLVDNKKDDT) are disordered. Residues 303–322 (EEIKAEHDASPLVDNKKDDT) are compositionally biased toward basic and acidic residues.

It belongs to the phosphatidylserine decarboxylase family. PSD-B subfamily. Prokaryotic type I sub-subfamily. Heterodimer of a large membrane-associated beta subunit and a small pyruvoyl-containing alpha subunit. Pyruvate is required as a cofactor. In terms of processing, is synthesized initially as an inactive proenzyme. Formation of the active enzyme involves a self-maturation process in which the active site pyruvoyl group is generated from an internal serine residue via an autocatalytic post-translational modification. Two non-identical subunits are generated from the proenzyme in this reaction, and the pyruvate is formed at the N-terminus of the alpha chain, which is derived from the carboxyl end of the proenzyme. The autoendoproteolytic cleavage occurs by a canonical serine protease mechanism, in which the side chain hydroxyl group of the serine supplies its oxygen atom to form the C-terminus of the beta chain, while the remainder of the serine residue undergoes an oxidative deamination to produce ammonia and the pyruvoyl prosthetic group on the alpha chain. During this reaction, the Ser that is part of the protease active site of the proenzyme becomes the pyruvoyl prosthetic group, which constitutes an essential element of the active site of the mature decarboxylase.

The protein resides in the cell membrane. The enzyme catalyses a 1,2-diacyl-sn-glycero-3-phospho-L-serine + H(+) = a 1,2-diacyl-sn-glycero-3-phosphoethanolamine + CO2. It functions in the pathway phospholipid metabolism; phosphatidylethanolamine biosynthesis; phosphatidylethanolamine from CDP-diacylglycerol: step 2/2. Functionally, catalyzes the formation of phosphatidylethanolamine (PtdEtn) from phosphatidylserine (PtdSer). This Salmonella dublin (strain CT_02021853) protein is Phosphatidylserine decarboxylase proenzyme.